Here is a 1207-residue protein sequence, read N- to C-terminus: DNA-directed RNA polymerase subunit beta' (1207 aa).

Zn(2+) contacts are provided by C60, C62, C75, and C78. The Mg(2+) site is built by D449, D451, and D453. Residues C822, C896, C903, and C906 each coordinate Zn(2+).

This sequence belongs to the RNA polymerase beta' chain family. In terms of assembly, the RNAP catalytic core consists of 2 alpha, 1 beta, 1 beta' and 1 omega subunit. When a sigma factor is associated with the core the holoenzyme is formed, which can initiate transcription. The cofactor is Mg(2+). Requires Zn(2+) as cofactor.

It catalyses the reaction RNA(n) + a ribonucleoside 5'-triphosphate = RNA(n+1) + diphosphate. Functionally, DNA-dependent RNA polymerase catalyzes the transcription of DNA into RNA using the four ribonucleoside triphosphates as substrates. The sequence is that of DNA-directed RNA polymerase subunit beta' from Staphylococcus aureus (strain MRSA252).